The sequence spans 952 residues: Probable RNA-binding protein 19 (952 aa).

The RRM 1 domain maps to 2–79; sequence SRLIVKNLPN…TRITVEFCKS (78 aa). 3 disordered regions span residues 85-126, 159-267, and 367-395; these read KPRA…LEKL, KAKT…RGAV, and KQAP…EEED. Residues 95–109 are compositionally biased toward low complexity; that stretch reads KSSQPKQPSQDSVPS. Over residues 163-180 the composition is skewed to polar residues; that stretch reads KASSDYLNFDSDSNSDSG. Phosphoserine occurs at positions 177, 179, and 183. Acidic residues-rich tracts occupy residues 181-196 and 224-251; these read QESE…EEEQ and SSED…EEEG. RRM domains lie at 293-368 and 400-478; these read YTVK…REKQ and GRLF…PSTI. Lysine 479 participates in a covalent cross-link: Glycyl lysine isopeptide (Lys-Gly) (interchain with G-Cter in SUMO2). The segment at 481 to 504 is disordered; sequence EASQEANAPGSSYKKKKEAMDKAN. Residues 584-656 form the RRM 4 domain; it reads TVILAKNLPA…VPLYLEWAPI (73 aa). Positions 664-679 are enriched in basic and acidic residues; the sequence is QKKDSQHEQPAEKAEV. Positions 664-719 are disordered; the sequence is QKKDSQHEQPAEKAEVEQETVLDPEGEKASVEGAEASTGKMEEEEEEEEEEEEESI. Residue serine 693 is modified to Phosphoserine. The segment covering 705 to 718 has biased composition (acidic residues); the sequence is EEEEEEEEEEEEES. 2 consecutive RRM domains span residues 722–803 and 824–904; these read CTLF…ISER and SKIL…WADS. Serine 928 and serine 944 each carry phosphoserine.

The protein belongs to the RRM MRD1 family. In terms of tissue distribution, expressed in the crypts of Lieberkuhn of the intestine (at protein level).

Its subcellular location is the nucleus. It localises to the nucleolus. The protein localises to the nucleoplasm. It is found in the cytoplasm. The protein resides in the chromosome. Functionally, plays a role in embryo pre-implantation development. The polypeptide is Probable RNA-binding protein 19 (Rbm19) (Mus musculus (Mouse)).